Reading from the N-terminus, the 388-residue chain is Chorismate synthase (388 aa).

The NADP(+) site is built by R39 and R45. FMN contacts are provided by residues 130–132 (RSS), 251–252 (NA), G296, 311–315 (KPIPT), and R337.

The protein belongs to the chorismate synthase family. As to quaternary structure, homotetramer. Requires FMNH2 as cofactor.

It carries out the reaction 5-O-(1-carboxyvinyl)-3-phosphoshikimate = chorismate + phosphate. Its pathway is metabolic intermediate biosynthesis; chorismate biosynthesis; chorismate from D-erythrose 4-phosphate and phosphoenolpyruvate: step 7/7. In terms of biological role, catalyzes the anti-1,4-elimination of the C-3 phosphate and the C-6 proR hydrogen from 5-enolpyruvylshikimate-3-phosphate (EPSP) to yield chorismate, which is the branch point compound that serves as the starting substrate for the three terminal pathways of aromatic amino acid biosynthesis. This reaction introduces a second double bond into the aromatic ring system. This chain is Chorismate synthase, found in Lactococcus lactis subsp. cremoris (strain MG1363).